The primary structure comprises 607 residues: Rap1 GTPase-GDP dissociation stimulator 1 (607 aa).

Residues 4-13 carry the Nuclear export signal (NES) motif; sequence LSDTLKKLKI. ARM repeat units lie at residues 89–131 and 170–211; these read GLIS…DQAG and DSLQ…NLAE. A prevents binding to prenylated RHOA region spans residues 122 to 170; that stretch reads EGRSAVDQAGGAQIVIDHLRSLCSITDPANEKLLTVFCGMLMNYSNEND. N6-acetyllysine is present on Lys230. The interval 239-255 is interacts with polybasic regions in GTPases; sequence DKREMIFEVLAPLAEND. 3 ARM repeats span residues 347–390, 391–431, and 479–519; these read DANC…NLAI, PVIN…MLID, and SKDV…LIAA. The tract at residues 379 to 428 is critical for catalytic activity; sequence HAALSALRNLAIPVINKAKMLSAGVTEAVLKFLKSEMPPVQFKLLGTLRM.

As to quaternary structure, interacts with RABL3. Interacts with RHOT1. In terms of assembly, interacts with unprenylated RHOA; the interaction is direct. Interacts with RAP1A. Interacts with KRAS. Interacts with RAC1. Interacts with RAP1B. Preferentially interacts with unprenylated GTPases that will become geranylgeranylated. May also interact with prenylated GTPases. Interacts with prenylated RHOA; the interaction is direct and in a 1:1 stoichiometry. Interacts with RAP1A. Interacts with KRAS. Interacts with RAC1. Interacts with RAP1B. Preferentially interacts with prenylated GTPases. Post-translationally, forms covalent cross-links mediated by transglutaminase TGM2, between a glutamine and the epsilon-amino group of a lysine residue, forming homopolymers and heteropolymers.

It localises to the cytoplasm. It is found in the cytosol. The protein localises to the endoplasmic reticulum. Its subcellular location is the mitochondrion. The protein resides in the nucleus. In terms of biological role, acts as a GEF (guanine nucleotide exchange factor) for the Rho family of small GTP-binding proteins (G proteins) that stimulates the dissociation of GDP to enable subsequent binding of GTP. Additionally, appears to chaperone the processing and/or trafficking of small GTPases containing a C-terminal polybasic region independently of GEF activity. Targets include RAP1A/RAP1B, RHOA, RHOB, RHOC, RAC1 and KRAS. Regulates mitochondrial dynamics by controlling RHOT function to promote mitochondrial fission during high calcium conditions. Able to promote the Ca(2+) release from the endoplasmic reticulum via both inositol trisphosphate (Ins3P) and ryanodine sensitive receptors leading to a enhanced mitochondrial Ca(2+) uptake. Functionally, acts as a GEF (guanine nucleotide exchange factor) for unprenylated RHOA. Chaperones the entry and passage of small GTPases through the prenylation pathway. Recognizes the last amino acid in the GTPase C-terminal CAAX motif with a preference for 'Leu' over 'Met', indicating involvement in the geranylgeranylation pathway. Its function is as follows. Acts as a GEF (guanine nucleotide exchange factor) for prenylated RHOA. Acts as a GEF for RHOC. Chaperones the downstream trafficking and/or processing of small newly prenylated GTPases. Escorts RAC1 to the nucleus. This chain is Rap1 GTPase-GDP dissociation stimulator 1, found in Homo sapiens (Human).